Reading from the N-terminus, the 249-residue chain is Metal-staphylopine import system ATP-binding protein CntF (249 aa).

An ABC transporter domain is found at 2–244 (IKIKDVEKSY…DNAYTRELIE (243 aa)). 42–49 (GESGSGKS) is an ATP binding site.

It belongs to the ABC transporter superfamily. In terms of assembly, the complex is composed of two ATP-binding proteins (CntD and CntF), two transmembrane proteins (CntB and CntC) and a solute-binding protein (CntA).

Its subcellular location is the cell membrane. Its activity is regulated as follows. Nickel/cobalt import is reduced in the presence of zinc. In terms of biological role, part of the ABC transporter complex CntABCDF (Opp1) involved in the uptake of metal in complex with the metallophore staphylopine (StP). Involved in the import of divalent metals ions such as nickel, cobalt and zinc. Probably responsible for energy coupling to the transport system. Plays a major role in nickel/cobalt import in zinc-depleted conditions. Contributes to virulence. Required for full urease activity in vitro. This Staphylococcus aureus (strain NCTC 8325 / PS 47) protein is Metal-staphylopine import system ATP-binding protein CntF.